Here is a 414-residue protein sequence, read N- to C-terminus: Acetate kinase (414 aa).

N7 contacts Mg(2+). K14 provides a ligand contact to ATP. R99 provides a ligand contact to substrate. Catalysis depends on D157, which acts as the Proton donor/acceptor. ATP contacts are provided by residues 217–221 and 341–345; these read HLGNG and GIGEN. E395 contributes to the Mg(2+) binding site.

The protein belongs to the acetokinase family. As to quaternary structure, homodimer. The cofactor is Mg(2+). It depends on Mn(2+) as a cofactor.

Its subcellular location is the cytoplasm. The enzyme catalyses acetate + ATP = acetyl phosphate + ADP. Its pathway is metabolic intermediate biosynthesis; acetyl-CoA biosynthesis; acetyl-CoA from acetate: step 1/2. Functionally, catalyzes the formation of acetyl phosphate from acetate and ATP. Can also catalyze the reverse reaction. This chain is Acetate kinase, found in Solibacter usitatus (strain Ellin6076).